The sequence spans 243 residues: Methylthioribulose-1-phosphate dehydratase (243 aa).

Cys-90 is a binding site for substrate. His-108 and His-110 together coordinate Zn(2+). The Proton donor/acceptor role is filled by Glu-131. His-193 serves as a coordination point for Zn(2+).

Belongs to the aldolase class II family. MtnB subfamily. Zn(2+) serves as cofactor.

The protein localises to the cytoplasm. It catalyses the reaction 5-(methylsulfanyl)-D-ribulose 1-phosphate = 5-methylsulfanyl-2,3-dioxopentyl phosphate + H2O. It functions in the pathway amino-acid biosynthesis; L-methionine biosynthesis via salvage pathway; L-methionine from S-methyl-5-thio-alpha-D-ribose 1-phosphate: step 2/6. In terms of biological role, catalyzes the dehydration of methylthioribulose-1-phosphate (MTRu-1-P) into 2,3-diketo-5-methylthiopentyl-1-phosphate (DK-MTP-1-P). This chain is Methylthioribulose-1-phosphate dehydratase, found in Zygosaccharomyces rouxii (strain ATCC 2623 / CBS 732 / NBRC 1130 / NCYC 568 / NRRL Y-229).